The sequence spans 181 residues: Inner kinetochore subunit MCM16 (181 aa).

The stretch at lysine 112 to histidine 171 forms a coiled coil.

The protein belongs to the CENP-H/MCM16 family. Component of the heterotrimeric kinetochore subcomplex CTF3, which consists of CTF3, MCM16 and MCM22. The CTF3 subcomplex is part of a larger constitutive centromere-associated network (CCAN) (also known as central kinetochore CTF19 complex in yeast), which is composed of at least AME1, CHL4, CNN1, CTF3, CTF19, IML3, MCM16, MCM21, MCM22, MHF1, MHF2, MIF2, NKP1, NKP2, OKP1 and WIP1. Interacts with CTF19.

The protein localises to the nucleus. It localises to the chromosome. The protein resides in the centromere. Its subcellular location is the kinetochore. In terms of biological role, component of the kinetochore, a multiprotein complex that assembles on centromeric DNA and attaches chromosomes to spindle microtubules, mediating chromosome segregation and sister chromatid segregation during meiosis and mitosis. Component of the inner kinetochore constitutive centromere-associated network (CCAN), which serves as a structural platform for outer kinetochore assembly. This is Inner kinetochore subunit MCM16 (MCM16) from Saccharomyces cerevisiae (strain ATCC 204508 / S288c) (Baker's yeast).